Reading from the N-terminus, the 335-residue chain is Foldase protein PrsA (335 aa).

The signal sequence occupies residues 1–22; the sequence is MRSAKKLLSVLCLGVFILTFTA. The N-palmitoyl cysteine moiety is linked to residue Cys23. The S-diacylglycerol cysteine moiety is linked to residue Cys23. The PpiC domain maps to 194 to 285; the sequence is PNTMNVSHIL…FGYHIIKINS (92 aa).

Belongs to the PrsA family.

Its subcellular location is the cell membrane. The catalysed reaction is [protein]-peptidylproline (omega=180) = [protein]-peptidylproline (omega=0). In terms of biological role, plays a major role in protein secretion by helping the post-translocational extracellular folding of several secreted proteins. In Clostridium botulinum (strain Loch Maree / Type A3), this protein is Foldase protein PrsA.